Consider the following 219-residue polypeptide: MVCAWQLWLSPRPKRSVIASGSHIYSNDDAALFEFLKEDDGRWVVRETHYINNPLVKNGLSGPPLHIHWKQAEYFKVEQGVIGIHKNGKQLRVTKDDGVIEVPAGTRHKFWSHPSNQEDLVFKVWAEPQGLDHSFDEKFIRNLIGYQRDCKMANMAPSVFQLMLICYDCATLATPPFWVPLWLLTSIQYVLAYWIGGHLLGYKPSYSEYYREPGDKKTM.

Belongs to the oxidoreductase OpS7 family.

It participates in secondary metabolite biosynthesis. In terms of biological role, probable oxidoreductase; part of the gene cluster that mediates the biosynthesis of virensols and trichoxide, fungal natural products that contain or are derived from a salicylaldehyde core. The pathway begins with the synthesis of the reduced chain in virensol C by the highly reducing polyketide synthase virA via condensation of one acetate and 8 malonate units. VirA has interesting programming rules since the first 2 ketides are fully reduced, the 3 following ketides undergo beta-dehydration, and the last 3 ketides are only reduced to beta-hydroxys to yield the trihydroxy portion. The production of aldehyde virensol C by virA alone is surprising, since virA does not contain a reductase (R) domain that is typically associated with reductive product release in HRPKS. The cupin-domain enzyme virC is involved in enhancing virA product turnover. The short-chain dehydrogenase virB then oxidizes the C-7 alcohol of virensol C to a ketone, yielding virensol D. Virensol D is further transformed to salicylaldehyde 5-deoxyaurocitrin by the short-chain dehydrogenase virD. VirD catalyzes the dehydrogenation of C-3 to form the beta-ketone aldehyde, which is followed by the generation of the nucleophilic C-2 that is required for the intramolecular aldol condensation between C-2 and C-7, itself followed by dehydration and aromatization which leads to salicylaldehyde 5-deoxyaurocitrin. While the dehydrogenation of virensol D is definitely catalyzed by virD, the aldol condensation and dehydration may be uncatalyzed or assisted by virD. The short chain dehydrogenase virG then converts salicylaldehyde 5-deoxyaurocitrin into virensol B which is further hydroxylated by the cytochrome P450 monooxygenase virE to yield the hydroquinone virensol A. VirI then may oxidize virensol A to form the quinone, while virH performs the epoxidation. Finally, the two remaining short-chain dehydrogenases, virK and virL, are probably responsible for reducing the ketones to the corresponding alcohols to furnish the epoxycyclohexanol structure in trichoxide. This chain is Probable oxidoreductase virH, found in Hypocrea virens (strain Gv29-8 / FGSC 10586) (Gliocladium virens).